Here is a 223-residue protein sequence, read N- to C-terminus: Icarapin (223 aa).

Residues 1–19 (MKTLGVLFIAAWFIACTHS) form the signal peptide. Residues asparagine 126, asparagine 142, asparagine 168, and asparagine 193 are each glycosylated (N-linked (GlcNAc...) asparagine). The span at 186 to 203 (LPTLIGKNETSTQSSRSV) shows a compositional bias: polar residues. The disordered stretch occupies residues 186 to 223 (LPTLIGKNETSTQSSRSVESVEDFDNEIPKNQGDVLTA).

As to expression, expressed by the venom duct.

Its subcellular location is the secreted. This chain is Icarapin, found in Apis mellifera carnica (Carniolan honeybee).